Reading from the N-terminus, the 260-residue chain is MNIEALNNFKQSGEKITCLTAYDASFASVFDVCGIDIILIGDSLGNVIQGGENTLNVSMDDMVYHTKAVTKGAQNALRISDMPYQSYTNSEQALTNAKLLIIAGAQMVKFEGGCEHEASFKIFQNNDIPVCGHLGLQPQSVIEMGGYKTEGRDKQSADKIIKDALALASWGVKVIVLECIPANLAKQVSQSLSIPTIGIGAGVNCDGQILVSYDMLGIHVGYVPKFVKNFLIDSGDIKSAVNAFIEAVKDKSFPGEQHSY.

Residues D42 and D81 each contribute to the Mg(2+) site. 3-methyl-2-oxobutanoate-binding positions include 42–43, D81, and K109; that span reads DS. E111 serves as a coordination point for Mg(2+). The active-site Proton acceptor is the E178.

It belongs to the PanB family. Homodecamer; pentamer of dimers. Requires Mg(2+) as cofactor.

It localises to the cytoplasm. The catalysed reaction is 3-methyl-2-oxobutanoate + (6R)-5,10-methylene-5,6,7,8-tetrahydrofolate + H2O = 2-dehydropantoate + (6S)-5,6,7,8-tetrahydrofolate. It participates in cofactor biosynthesis; (R)-pantothenate biosynthesis; (R)-pantoate from 3-methyl-2-oxobutanoate: step 1/2. Its function is as follows. Catalyzes the reversible reaction in which hydroxymethyl group from 5,10-methylenetetrahydrofolate is transferred onto alpha-ketoisovalerate to form ketopantoate. This chain is 3-methyl-2-oxobutanoate hydroxymethyltransferase, found in Ruthia magnifica subsp. Calyptogena magnifica.